The sequence spans 298 residues: Leucine-rich repeat-containing protein 55 (298 aa).

The N-terminal stretch at 1-34 (MGDTWAQLPWPGPPHSALLLVFFLLAAGVMHSDA) is a signal peptide. In terms of domain architecture, LRRNT spans 35 to 65 (GTSCPVLCTCRNQVVDCSNQRLFSVPPDLPM). Intrachain disulfides connect Cys-38-Cys-44 and Cys-42-Cys-51. 5 LRR repeats span residues 66–87 (DTRNLSLAHNRIAAVPPGYLTC), 90–111 (ELRVLDLRNNSLMELPPGLFLH), 114–135 (RLAHLDLSYNNLSHVPADMFRE), 138–160 (GLVHIDLSHNPWLRRVHPQAFQG), and 163–186 (HLRDLDLSYGGLAFLSLEALEGLP). One can recognise an LRRCT domain in the interval 196 to 251 (NPWVCGCTMEPLLKWLRNRIQRCTADSQLAECRGPPEVEGAPLFSLTEESFKACHL). Intrachain disulfides connect Cys-200–Cys-227 and Cys-202–Cys-249. The chain crosses the membrane as a helical span at residues 259–279 (LFIAFVGFVVSIASVATNFLL).

As to quaternary structure, interacts with KCNMA1.

The protein resides in the cell membrane. Auxiliary protein of the large-conductance, voltage and calcium-activated potassium channel (BK alpha). Modulates gating properties by producing a marked shift in the BK channel's voltage dependence of activation in the hyperpolarizing direction, and in the absence of calcium. This is Leucine-rich repeat-containing protein 55 (Lrrc55) from Mus musculus (Mouse).